The following is a 237-amino-acid chain: MIVFILLSLAAVLRQSFGNVDFNSESPRNPGKQQEIVNIHNSFRRSVRPTARNMLKMEWYSEAASNAERWAYQCAYDHSPRSSRILNGIQCGENIFMASDPWAWTSIIQDWYDEYRNFVYGVGANPPDSVTGHYTQIVWYKSYLVGCAAAYCPSSLYNYFYVCQYCPAGNIQGSTSTPYASGPTCADCPSNCDNGLCTNPCTHKDDYNNCNSLVSDCQSDWDKSHCPATCFCKNKII.

Residues 1–18 form the signal peptide; it reads MIVFILLSLAAVLRQSFG. Positions 37–165 constitute an SCP domain; it reads VNIHNSFRRS…LYNYFYVCQY (129 aa). Intrachain disulfides connect cysteine 74–cysteine 152, cysteine 91–cysteine 166, cysteine 147–cysteine 163, cysteine 185–cysteine 192, cysteine 188–cysteine 197, cysteine 201–cysteine 232, cysteine 210–cysteine 226, and cysteine 217–cysteine 230. A ShKT domain is found at 201–232; that stretch reads CTHKDDYNNCNSLVSDCQSDWDKSHCPATCFC.

This sequence belongs to the CRISP family. Expressed by the venom gland.

It localises to the secreted. In terms of biological role, this protein does not inhibit smooth muscle contraction elicited by high potassium levels or caffeine. This chain is Cysteine-rich venom protein tigrin, found in Rhabdophis tigrinus tigrinus (Tiger keelback snake).